The primary structure comprises 275 residues: 3-methyl-2-oxobutanoate hydroxymethyltransferase (275 aa).

Positions 44 and 83 each coordinate Mg(2+). 3-methyl-2-oxobutanoate contacts are provided by residues 44–45, aspartate 83, and lysine 113; that span reads DS. Glutamate 115 lines the Mg(2+) pocket. The active-site Proton acceptor is the glutamate 182.

It belongs to the PanB family. In terms of assembly, homodecamer; pentamer of dimers. The cofactor is Mg(2+).

It is found in the cytoplasm. The catalysed reaction is 3-methyl-2-oxobutanoate + (6R)-5,10-methylene-5,6,7,8-tetrahydrofolate + H2O = 2-dehydropantoate + (6S)-5,6,7,8-tetrahydrofolate. It functions in the pathway cofactor biosynthesis; (R)-pantothenate biosynthesis; (R)-pantoate from 3-methyl-2-oxobutanoate: step 1/2. Functionally, catalyzes the reversible reaction in which hydroxymethyl group from 5,10-methylenetetrahydrofolate is transferred onto alpha-ketoisovalerate to form ketopantoate. This chain is 3-methyl-2-oxobutanoate hydroxymethyltransferase, found in Clostridium novyi (strain NT).